The sequence spans 337 residues: Dihydroorotate dehydrogenase (quinone) (337 aa).

Residues 62–66 (AGLDK) and Thr86 each bind FMN. A substrate-binding site is contributed by Lys66. Substrate is bound at residue 111–115 (NRMGF). 2 residues coordinate FMN: Asn140 and Asn173. Asn173 provides a ligand contact to substrate. Residue Ser176 is the Nucleophile of the active site. Substrate is bound at residue Asn178. FMN is bound by residues Lys218 and Thr246. Substrate is bound at residue 247–248 (NT). FMN is bound by residues Gly269, Gly298, and 319–320 (YS).

The protein belongs to the dihydroorotate dehydrogenase family. Type 2 subfamily. As to quaternary structure, monomer. Requires FMN as cofactor.

The protein localises to the cell membrane. It carries out the reaction (S)-dihydroorotate + a quinone = orotate + a quinol. Its pathway is pyrimidine metabolism; UMP biosynthesis via de novo pathway; orotate from (S)-dihydroorotate (quinone route): step 1/1. Functionally, catalyzes the conversion of dihydroorotate to orotate with quinone as electron acceptor. The sequence is that of Dihydroorotate dehydrogenase (quinone) from Wigglesworthia glossinidia brevipalpis.